The sequence spans 387 residues: 1-deoxy-D-xylulose 5-phosphate reductoisomerase (387 aa).

NADPH contacts are provided by Thr-10, Gly-11, Ile-13, Asn-38, and Asn-122. Lys-123 contributes to the 1-deoxy-D-xylulose 5-phosphate binding site. Glu-124 provides a ligand contact to NADPH. A Mn(2+)-binding site is contributed by Asp-148. Positions 149, 150, 174, and 197 each coordinate 1-deoxy-D-xylulose 5-phosphate. Glu-150 contacts Mn(2+). Gly-203 contacts NADPH. Positions 210, 215, 216, and 219 each coordinate 1-deoxy-D-xylulose 5-phosphate. Glu-219 provides a ligand contact to Mn(2+).

The protein belongs to the DXR family. The cofactor is Mg(2+). Requires Mn(2+) as cofactor.

It carries out the reaction 2-C-methyl-D-erythritol 4-phosphate + NADP(+) = 1-deoxy-D-xylulose 5-phosphate + NADPH + H(+). It functions in the pathway isoprenoid biosynthesis; isopentenyl diphosphate biosynthesis via DXP pathway; isopentenyl diphosphate from 1-deoxy-D-xylulose 5-phosphate: step 1/6. Functionally, catalyzes the NADPH-dependent rearrangement and reduction of 1-deoxy-D-xylulose-5-phosphate (DXP) to 2-C-methyl-D-erythritol 4-phosphate (MEP). This Ehrlichia canis (strain Jake) protein is 1-deoxy-D-xylulose 5-phosphate reductoisomerase.